A 501-amino-acid chain; its full sequence is NAD(P)H-quinone oxidoreductase subunit 2, chloroplastic (501 aa).

Helical transmembrane passes span 15 to 35 (ILPE…DLIL), 42 to 62 (VFFF…IFQL), 82 to 102 (IFRI…IDFI), 107 to 127 (LAIT…MFLC), 132 to 152 (LITI…LSGY), 167 to 187 (LLIG…LYGL), 210 to 230 (FGSL…LSLV), 244 to 264 (PTPV…ALLV), 278 to 298 (WHSL…LVAI), 307 to 327 (LAYS…TGNF), 334 to 354 (IVYL…IILF), 378 to 398 (FSLA…GFFG), 410 to 430 (GLYF…YYYL), and 466 to 486 (VSII…NPII).

Belongs to the complex I subunit 2 family. In terms of assembly, NDH is composed of at least 16 different subunits, 5 of which are encoded in the nucleus.

It localises to the plastid. The protein resides in the chloroplast thylakoid membrane. It catalyses the reaction a plastoquinone + NADH + (n+1) H(+)(in) = a plastoquinol + NAD(+) + n H(+)(out). The catalysed reaction is a plastoquinone + NADPH + (n+1) H(+)(in) = a plastoquinol + NADP(+) + n H(+)(out). Its function is as follows. NDH shuttles electrons from NAD(P)H:plastoquinone, via FMN and iron-sulfur (Fe-S) centers, to quinones in the photosynthetic chain and possibly in a chloroplast respiratory chain. The immediate electron acceptor for the enzyme in this species is believed to be plastoquinone. Couples the redox reaction to proton translocation, and thus conserves the redox energy in a proton gradient. This is NAD(P)H-quinone oxidoreductase subunit 2, chloroplastic from Physcomitrium patens (Spreading-leaved earth moss).